The following is a 485-amino-acid chain: MAQRFYDTRTAQIRDFEPLVPGEASVYYCGATVQGMPHVGHVRSAIVFDILIRWLEATGLRVTSVRNVTDIDDKILDRSAASHEAGFEASDLYPAREPWWALAYRFEKAFDAAYLALGVRRPTYEPRATGHVPEMFALIERLMERGHAYPAQDGSGDVYFDVRSWERYGELTRQRVEDMQDAPDADPRGKRDPHDFALWKGAKPGEPATAVWESPWGAGRPGWHLECSAMSTKYLGAEFDIHGGGLDLRFPHHENELAQSAAAGDGFARFWLHNGLVTYGGEKMSKSVGNTISPEEMLGMARPTAVRYFLGQAHYRSQLDYRPGALDEAEAVVERIEGFTARARAAGAVPPAPDGALADRVPAAFRTAMEDDLNVPQALAALHEAVRAGNSALAGQDLDAAAARLAEVEAMTAVLGLDDVPEGDDAAAGPVSDALDSLVRSQIEARAQARADKDWATADRIRDALAAAGVVVEDGADGATWRLAD.

C29 is a Zn(2+) binding site. The 'HIGH' region signature appears at 31–41 (ATVQGMPHVGH). The tract at residues 174–198 (QRVEDMQDAPDADPRGKRDPHDFAL) is disordered. The span at 185–197 (ADPRGKRDPHDFA) shows a compositional bias: basic and acidic residues. The Zn(2+) site is built by C227, H252, and E256. A 'KMSKS' region motif is present at residues 283 to 287 (KMSKS). Residue K286 participates in ATP binding.

It belongs to the class-I aminoacyl-tRNA synthetase family. In terms of assembly, monomer. It depends on Zn(2+) as a cofactor.

The protein resides in the cytoplasm. The catalysed reaction is tRNA(Cys) + L-cysteine + ATP = L-cysteinyl-tRNA(Cys) + AMP + diphosphate. The polypeptide is Cysteine--tRNA ligase (Micrococcus luteus (strain ATCC 4698 / DSM 20030 / JCM 1464 / CCM 169 / CCUG 5858 / IAM 1056 / NBRC 3333 / NCIMB 9278 / NCTC 2665 / VKM Ac-2230) (Micrococcus lysodeikticus)).